Here is a 101-residue protein sequence, read N- to C-terminus: Phosphoribosyl-AMP cyclohydrolase (101 aa).

Aspartate 71 serves as a coordination point for Mg(2+). Cysteine 72 serves as a coordination point for Zn(2+). Mg(2+)-binding residues include aspartate 73 and aspartate 75. Residues cysteine 88 and cysteine 95 each coordinate Zn(2+).

This sequence belongs to the PRA-CH family. As to quaternary structure, homodimer. It depends on Mg(2+) as a cofactor. Zn(2+) serves as cofactor.

It is found in the cytoplasm. It catalyses the reaction 1-(5-phospho-beta-D-ribosyl)-5'-AMP + H2O = 1-(5-phospho-beta-D-ribosyl)-5-[(5-phospho-beta-D-ribosylamino)methylideneamino]imidazole-4-carboxamide. It participates in amino-acid biosynthesis; L-histidine biosynthesis; L-histidine from 5-phospho-alpha-D-ribose 1-diphosphate: step 3/9. Its function is as follows. Catalyzes the hydrolysis of the adenine ring of phosphoribosyl-AMP. The polypeptide is Phosphoribosyl-AMP cyclohydrolase (Bacillus cereus (strain AH820)).